The sequence spans 370 residues: Flagellar P-ring protein (370 aa).

Residues 1–21 (MKYILIKLSIVMIFIINSASK) form the signal peptide.

This sequence belongs to the FlgI family. As to quaternary structure, the basal body constitutes a major portion of the flagellar organelle and consists of four rings (L,P,S, and M) mounted on a central rod.

It localises to the bacterial flagellum basal body. Assembles around the rod to form the L-ring and probably protects the motor/basal body from shearing forces during rotation. In Wigglesworthia glossinidia brevipalpis, this protein is Flagellar P-ring protein.